We begin with the raw amino-acid sequence, 260 residues long: Thiazole synthase (260 aa).

Lysine 102 acts as the Schiff-base intermediate with DXP in catalysis. Residues glycine 163, 189 to 190 (AG), and 211 to 212 (NT) each bind 1-deoxy-D-xylulose 5-phosphate.

It belongs to the ThiG family. Homotetramer. Forms heterodimers with either ThiH or ThiS.

The protein resides in the cytoplasm. It carries out the reaction [ThiS sulfur-carrier protein]-C-terminal-Gly-aminoethanethioate + 2-iminoacetate + 1-deoxy-D-xylulose 5-phosphate = [ThiS sulfur-carrier protein]-C-terminal Gly-Gly + 2-[(2R,5Z)-2-carboxy-4-methylthiazol-5(2H)-ylidene]ethyl phosphate + 2 H2O + H(+). Its pathway is cofactor biosynthesis; thiamine diphosphate biosynthesis. In terms of biological role, catalyzes the rearrangement of 1-deoxy-D-xylulose 5-phosphate (DXP) to produce the thiazole phosphate moiety of thiamine. Sulfur is provided by the thiocarboxylate moiety of the carrier protein ThiS. In vitro, sulfur can be provided by H(2)S. In Geotalea uraniireducens (strain Rf4) (Geobacter uraniireducens), this protein is Thiazole synthase.